A 271-amino-acid polypeptide reads, in one-letter code: MKCTGVLQLSAAKKRQKTIISSCYHEGALKVSRPIYLEKDLPFLYLIHVGGGYVDGDVYLTNLDVEEEAELAVTTQSATKVYKTPKKPVVQQTNIHLKKGSVLEYLLDPLISYKGARFIQETTVHIEEDSGFFYSDVITPGWAEDGSLFPYDWIRSKLKVYKKDRLVLFDHLRLEPDEDMSGMLQMDGYTHIGTFLIFHQKADKTFLDRLYDEMEAFDSDVRFGMTSLPASGIILRILARSTGIIENMISRAHSFARRELLGKNGVTWRKY.

This sequence belongs to the UreD family. UreD, UreF and UreG form a complex that acts as a GTP-hydrolysis-dependent molecular chaperone, activating the urease apoprotein by helping to assemble the nickel containing metallocenter of UreC. The UreE protein probably delivers the nickel.

It localises to the cytoplasm. Required for maturation of urease via the functional incorporation of the urease nickel metallocenter. The chain is Urease accessory protein UreD from Bacillus sp. (strain TB-90).